A 533-amino-acid chain; its full sequence is UDP-glucuronosyltransferase 1A1 (533 aa).

An N-terminal signal peptide occupies residues 1–25 (MAVESQGGRPLVLGLLLCVLGPVVS). 3 N-linked (GlcNAc...) asparagine glycosylation sites follow: N102, N295, and N347. A helical membrane pass occupies residues 491-507 (VIGFLLAVVLTVAFITF).

It belongs to the UDP-glycosyltransferase family. Homodimer. Homooligomer. Interacts with UGT1A3, UGT1A4, UGT1A6, UGT1A7, UGT1A8, UGT1A9 and UGT1A10 to form heterodimers. Isoform 1 interacts with isoform 2/i2 suggesting that oligomerization is involved in negative regulation of transferase activity by isoform 2. Isoform 1 also interacts with respective i2 isoforms of UGT1A3, UGT1A4, UGT1A6, UGT1A7, UGT1A8, UGT1A9 and UGT1A10. In terms of tissue distribution, expressed in liver, colon and small intestine. Not expressed in kidney, esophagus and skin. Expressed in liver, colon, small intestine and kidney. Not expressed in esophagus and skin.

It localises to the endoplasmic reticulum membrane. Its subcellular location is the cytoplasm. The protein resides in the perinuclear region. The catalysed reaction is glucuronate acceptor + UDP-alpha-D-glucuronate = acceptor beta-D-glucuronoside + UDP + H(+). It catalyses the reaction 17beta-estradiol + UDP-alpha-D-glucuronate = 17beta-estradiol 3-O-(beta-D-glucuronate) + UDP + H(+). The enzyme catalyses 2-hydroxyestrone + UDP-alpha-D-glucuronate = 2-hydroxyestrone 3-O-(beta-D-glucuronate) + UDP + H(+). It carries out the reaction 2-hydroxy-17beta-estradiol + UDP-alpha-D-glucuronate = 2-hydroxy-17beta-estradiol 3-O-(beta-D-glucuronate) + UDP + H(+). The catalysed reaction is 2-methoxy-17beta-estradiol + UDP-alpha-D-glucuronate = 2-methoxy-17beta-estradiol 3-O-(beta-D-glucuronate) + UDP + H(+). It catalyses the reaction 17alpha-estradiol + UDP-alpha-D-glucuronate = 17alpha-estradiol 3-O-(beta-D-glucuronate) + UDP + H(+). The enzyme catalyses 16beta,17beta-estriol + UDP-alpha-D-glucuronate = 16beta,17beta-estriol 16-O-(beta-D-glucuronate) + UDP + H(+). It carries out the reaction losartan + UDP-alpha-D-glucuronate = losartan-2-N-beta-D-glucuronide + UDP. The catalysed reaction is prunetin + UDP-alpha-D-glucuronate = prunetin-4'-O-beta-D-glucuronide + UDP. It catalyses the reaction SN-38 + UDP-alpha-D-glucuronate = SN-38 O-beta-D-glucuronide + UDP + H(+). The enzyme catalyses (4Z,15Z)-bilirubin IXalpha + UDP-alpha-D-glucuronate = (4Z,15Z)-bilirubin IXalpha C12-beta-D-glucuronoside + UDP. It carries out the reaction (4Z,15Z)-bilirubin IXalpha + UDP-alpha-D-glucuronate = (4Z,15Z)-bilirubin IXalpha C8-beta-D-glucuronoside + UDP. The catalysed reaction is (4Z,15Z)-bilirubin IXalpha C8-beta-D-glucuronoside + UDP-alpha-D-glucuronate = (4Z,15Z)-bilirubin IXalpha C8,C12-beta-D-bisglucuronoside + UDP. It catalyses the reaction (4Z,15Z)-bilirubin IXalpha C12-beta-D-glucuronoside + UDP-alpha-D-glucuronate = (4Z,15Z)-bilirubin IXalpha C8,C12-beta-D-bisglucuronoside + UDP. The enzyme catalyses 8-iso-prostaglandin F2alpha + UDP-alpha-D-glucuronate = 8-iso-prostaglandin F2alpha-glucuronide + UDP + H(+). It carries out the reaction (5Z,8Z,11Z,14Z)-eicosatetraenoate + UDP-alpha-D-glucuronate = O-[(5Z),(8Z),(11Z),(14Z)-eicosatetraenoyl]-beta-D-glucuronate + UDP. The catalysed reaction is 15-hydroxy-(5Z,8Z,11Z,13E)-eicosatetraenoate + UDP-alpha-D-glucuronate = 15-O-(beta-D-glucuronosyl)-(5Z,8Z,11Z,14Z)-eicosatetraenoate + UDP + H(+). It catalyses the reaction 20-hydroxy-(5Z,8Z,11Z,14Z)-eicosatetraenoate + UDP-alpha-D-glucuronate = 20-O-(beta-D-glucuronosyl)-(5Z,8Z,11Z,14Z)-eicosatetraenoate + UDP + H(+). The enzyme catalyses prostaglandin B1 + UDP-alpha-D-glucuronate = 15-O-(beta-D-glucuronosyl)-prostaglandin B1 + UDP + H(+). It carries out the reaction (E)-ferulate + UDP-alpha-D-glucuronate = (E)-4-O-(beta-D-glucuronosyl)-ferulate + UDP + H(+). The catalysed reaction is (E)-ferulate + UDP-alpha-D-glucuronate = (E)-ferulic acid beta-D-glucuronate ester + UDP. Its function is as follows. UDP-glucuronosyltransferase (UGT) that catalyzes phase II biotransformation reactions in which lipophilic substrates are conjugated with glucuronic acid to increase the metabolite's water solubility, thereby facilitating excretion into either the urine or bile. Essential for the elimination and detoxification of drugs, xenobiotics and endogenous compounds. Catalyzes the glucuronidation of endogenous estrogen hormones such as estradiol, estrone and estriol. Involved in the glucuronidation of bilirubin, a degradation product occurring in the normal catabolic pathway that breaks down heme in vertebrates. Involved in the glucuronidation of arachidonic acid (AA) and AA-derived eicosanoids including 15-HETE, 20-HETE, PGB1 and F2-isoprostane (8-iso-PGF2alpha). Involved in the glucuronidation of the phytochemical ferulic acid at the phenolic or the carboxylic acid group. Also catalyzes the glucuronidation the isoflavones genistein, daidzein, glycitein, formononetin, biochanin A and prunetin, which are phytoestrogens with anticancer and cardiovascular properties. Involved in the glucuronidation of the AGTR1 angiotensin receptor antagonist losartan, a drug which can inhibit the effect of angiotensin II. Involved in the biotransformation of 7-ethyl-10-hydroxycamptothecin (SN-38), the pharmacologically active metabolite of the anticancer drug irinotecan. In terms of biological role, lacks UGT glucuronidation activity but acts as a negative regulator of isoform 1. The sequence is that of UDP-glucuronosyltransferase 1A1 from Homo sapiens (Human).